Consider the following 356-residue polypeptide: Riboflavin biosynthesis protein RibD (356 aa).

A deaminase region spans residues 1 to 148 (MIREIDKNYM…EDFFTYITQE (148 aa)). In terms of domain architecture, CMP/dCMP-type deaminase spans 4–126 (EIDKNYMKLA…KLRNAGIEVD (123 aa)). His-53 provides a ligand contact to Zn(2+). Glu-55 serves as the catalytic Proton donor. Zn(2+) is bound by residues Cys-78 and Cys-87. The segment at 149–356 (RPYITLKWAQ…EDLVIFFKRY (208 aa)) is reductase. Residue Ala-157 coordinates NADP(+). Ser-171 is a substrate binding site. Residue Trp-173 coordinates NADP(+). Residue Arg-187 coordinates substrate. Thr-199 and Asp-203 together coordinate NADP(+). Leu-207, Arg-210, and Glu-290 together coordinate substrate. 292–298 (GPRTLTS) is a binding site for NADP(+).

The protein in the N-terminal section; belongs to the cytidine and deoxycytidylate deaminase family. This sequence in the C-terminal section; belongs to the HTP reductase family. Requires Zn(2+) as cofactor.

It carries out the reaction 2,5-diamino-6-hydroxy-4-(5-phosphoribosylamino)-pyrimidine + H2O + H(+) = 5-amino-6-(5-phospho-D-ribosylamino)uracil + NH4(+). It catalyses the reaction 5-amino-6-(5-phospho-D-ribitylamino)uracil + NADP(+) = 5-amino-6-(5-phospho-D-ribosylamino)uracil + NADPH + H(+). It participates in cofactor biosynthesis; riboflavin biosynthesis; 5-amino-6-(D-ribitylamino)uracil from GTP: step 2/4. The protein operates within cofactor biosynthesis; riboflavin biosynthesis; 5-amino-6-(D-ribitylamino)uracil from GTP: step 3/4. Its function is as follows. Converts 2,5-diamino-6-(ribosylamino)-4(3h)-pyrimidinone 5'-phosphate into 5-amino-6-(ribosylamino)-2,4(1h,3h)-pyrimidinedione 5'-phosphate. The chain is Riboflavin biosynthesis protein RibD (ribD) from Aquifex aeolicus (strain VF5).